A 381-amino-acid chain; its full sequence is NAD-dependent methanol dehydrogenase (381 aa).

The protein belongs to the iron-containing alcohol dehydrogenase family. Homodecamer. Mg(2+) serves as cofactor. It depends on Zn(2+) as a cofactor.

The protein localises to the cytoplasm. It catalyses the reaction methanol + NAD(+) = formaldehyde + NADH + H(+). The protein operates within one-carbon metabolism; methanol degradation; formaldehyde from methanol: step 1/1. With respect to regulation, stimulated by the activator protein Act which requires the presence of magnesium ions. Inhibited by 1,10-phenanthroline. Catalyzes the oxidation of methanol to yield formaldehyde. It possesses a NADH-dependent formaldehyde reductase activity and cannot use NADP. This chain is NAD-dependent methanol dehydrogenase, found in Bacillus methanolicus.